A 950-amino-acid polypeptide reads, in one-letter code: Bifunctional glutamine synthetase adenylyltransferase/adenylyl-removing enzyme (950 aa).

The segment at 1–443 (MSLPSPLLPV…VFVTLIGDEE (443 aa)) is adenylyl removase. An adenylyl transferase region spans residues 450-950 (ERHFNELWDM…WQEWLESSTI (501 aa)).

Belongs to the GlnE family. The cofactor is Mg(2+).

It carries out the reaction [glutamine synthetase]-O(4)-(5'-adenylyl)-L-tyrosine + phosphate = [glutamine synthetase]-L-tyrosine + ADP. The catalysed reaction is [glutamine synthetase]-L-tyrosine + ATP = [glutamine synthetase]-O(4)-(5'-adenylyl)-L-tyrosine + diphosphate. Involved in the regulation of glutamine synthetase GlnA, a key enzyme in the process to assimilate ammonia. When cellular nitrogen levels are high, the C-terminal adenylyl transferase (AT) inactivates GlnA by covalent transfer of an adenylyl group from ATP to specific tyrosine residue of GlnA, thus reducing its activity. Conversely, when nitrogen levels are low, the N-terminal adenylyl removase (AR) activates GlnA by removing the adenylyl group by phosphorolysis, increasing its activity. The regulatory region of GlnE binds the signal transduction protein PII (GlnB) which indicates the nitrogen status of the cell. The chain is Bifunctional glutamine synthetase adenylyltransferase/adenylyl-removing enzyme from Vibrio vulnificus (strain YJ016).